The primary structure comprises 180 residues: Probable nicotinate-nucleotide adenylyltransferase (180 aa).

It belongs to the NadD family.

It carries out the reaction nicotinate beta-D-ribonucleotide + ATP + H(+) = deamido-NAD(+) + diphosphate. The protein operates within cofactor biosynthesis; NAD(+) biosynthesis; deamido-NAD(+) from nicotinate D-ribonucleotide: step 1/1. Its function is as follows. Catalyzes the reversible adenylation of nicotinate mononucleotide (NaMN) to nicotinic acid adenine dinucleotide (NaAD). The protein is Probable nicotinate-nucleotide adenylyltransferase of Pelagibacter ubique (strain HTCC1062).